A 197-amino-acid chain; its full sequence is Phosphoheptose isomerase (197 aa).

The SIS domain occupies 36–197 (MVQCLVSEGK…IDQQLFGSTE (162 aa)). 51 to 53 (NGG) contributes to the substrate binding site. Residues histidine 60 and glutamate 64 each coordinate Zn(2+). Residues glutamate 64, 93-94 (ND), 119-121 (STS), serine 124, and glutamine 174 contribute to the substrate site. Zn(2+) contacts are provided by glutamine 174 and histidine 182.

This sequence belongs to the SIS family. GmhA subfamily. Homotetramer. Zn(2+) serves as cofactor.

The protein resides in the cytoplasm. It catalyses the reaction 2 D-sedoheptulose 7-phosphate = D-glycero-alpha-D-manno-heptose 7-phosphate + D-glycero-beta-D-manno-heptose 7-phosphate. It participates in carbohydrate biosynthesis; D-glycero-D-manno-heptose 7-phosphate biosynthesis; D-glycero-alpha-D-manno-heptose 7-phosphate and D-glycero-beta-D-manno-heptose 7-phosphate from sedoheptulose 7-phosphate: step 1/1. In terms of biological role, catalyzes the isomerization of sedoheptulose 7-phosphate in D-glycero-D-manno-heptose 7-phosphate. The protein is Phosphoheptose isomerase of Chromohalobacter salexigens (strain ATCC BAA-138 / DSM 3043 / CIP 106854 / NCIMB 13768 / 1H11).